We begin with the raw amino-acid sequence, 158 residues long: uncharacterized protein (158 aa).

The Nudix hydrolase domain maps to 3–130 (YLQRVTNCVL…DGHILDFMMK (128 aa)). Residues 34-55 (GKMESGESVRDSVIREYREETG) carry the Nudix box motif. Residues glutamate 49 and glutamate 53 each contribute to the Mg(2+) site.

It belongs to the Nudix hydrolase family. The cofactor is Mg(2+).

This is an uncharacterized protein from Bacillus subtilis (strain 168).